Here is an 85-residue protein sequence, read N- to C-terminus: Large ribosomal subunit protein bL27 (85 aa).

The disordered stretch occupies residues 1–22 (MAHKKAGGSTRNGRDSESKRLG).

The protein belongs to the bacterial ribosomal protein bL27 family.

The sequence is that of Large ribosomal subunit protein bL27 from Teredinibacter turnerae (strain ATCC 39867 / T7901).